A 422-amino-acid polypeptide reads, in one-letter code: Metallocarboxypeptidase A (422 aa).

The N-terminal stretch at Met1–Ala17 is a signal peptide. A propeptide spans Ala18–Pro112 (activation peptide). Positions Ser119–Val419 constitute a Peptidase M14 domain. 2 residues coordinate Zn(2+): His179 and Glu182. Residues His179–Glu182, Arg237, and Asn254–Arg255 contribute to the substrate site. Cys248 and Cys271 are oxidised to a cystine. Position 309 (His309) interacts with Zn(2+). Position 310-311 (Ser310–Tyr311) interacts with substrate. The active-site Proton donor/acceptor is the Glu385.

It belongs to the peptidase M14 family. Requires Zn(2+) as cofactor.

The protein localises to the secreted. Its function is as follows. Extracellular metalloprotease that contributes to pathogenicity. This is Metallocarboxypeptidase A (MCPA) from Trichophyton rubrum (Athlete's foot fungus).